Reading from the N-terminus, the 999-residue chain is Sarcoplasmic/endoplasmic reticulum calcium ATPase 3 (999 aa).

The residue at position 1 (M1) is an N-acetylmethionine. Residues 1 to 48 lie on the Cytoplasmic side of the membrane; it reads MEEAHLLSAADVLRRFSVTAEGGLTLEQVTDARERYGPNELPTEEGKS. S17 carries the phosphoserine modification. The residue at position 19 (T19) is a Phosphothreonine. A helical membrane pass occupies residues 49–69; the sequence is LWELVVEQFEDLLVRILLLAA. Over 70-89 the chain is Lumenal; it reads LVSFVLAWFEEGEETTTAFV. Residues 90–110 form a helical membrane-spanning segment; the sequence is EPLVIMLILVANAIVGVWQER. At 111-253 the chain is on the cytoplasmic side; the sequence is NAESAIEALK…PERTPLQRKL (143 aa). Residues 254 to 273 traverse the membrane as a helical segment; that stretch reads DEFGRQLSHAISVICVAVWV. Residues 274–295 lie on the Lumenal side of the membrane; sequence INIGHFADPAHGGSWLRGAVYY. A helical membrane pass occupies residues 296 to 313; that stretch reads FKIAVALAVAAIPEGLPA. The Ca(2+) site is built by V304, A305, I307, and E309. Over 314–757 the chain is Cytoplasmic; it reads VITTCLALGT…EEGRAIYNNM (444 aa). Catalysis depends on D351, which acts as the 4-aspartylphosphate intermediate. Mg(2+) contacts are provided by D351 and T353. T353 provides a ligand contact to ATP. Positions 370 to 400 are interaction with phospholamban 1; sequence AEAEAGACRLHEFTISGTTYTPEGEVRQGEQ. The residue at position 415 (T415) is a Phosphothreonine. 7 residues coordinate ATP: E442, R489, K515, R560, T625, G626, and D627. Residue S662 is modified to Phosphoserine. ATP contacts are provided by R678 and K684. D703 contacts Mg(2+). N706 lines the ATP pocket. A helical membrane pass occupies residues 758–777; that stretch reads KQFIRYLISSNVGEVVCIFL. N768 and E771 together coordinate Ca(2+). The Lumenal portion of the chain corresponds to 778 to 787; it reads TAILGLPEAL. Residues 788-808 traverse the membrane as a helical segment; the sequence is IPVQLLWVNLVTDGLPATALG. Residues 788–808 form an interaction with phospholamban 2 region; that stretch reads IPVQLLWVNLVTDGLPATALG. The Ca(2+) site is built by N796, T799, and D800. The Cytoplasmic segment spans residues 809–828; the sequence is FNPPDLDIMEKLPRNPREAL. The chain crosses the membrane as a helical span at residues 829 to 851; sequence ISGWLFFRYLAIGVYVGLATVAA. Topologically, residues 852–897 are lumenal; it reads ATWWFLYDAEGPQVTFHQLRNFLKCSEDNPLFAGIDCEVFESRFPT. Residues 898-917 form a helical membrane-spanning segment; the sequence is TMALSVLVTIEMCNALNSVS. E908 is a binding site for Ca(2+). Residues 918–930 lie on the Cytoplasmic side of the membrane; the sequence is ENQSLLRMPPWLN. The chain crosses the membrane as a helical span at residues 931–949; that stretch reads PWLLGAVVMSMALHFLILL. Residues 950 to 964 are Lumenal-facing; that stretch reads VPPLPLIFQVTPLSG. The chain crosses the membrane as a helical span at residues 965 to 985; that stretch reads RQWGVVLQMSLPVILLDEALK. The Cytoplasmic segment spans residues 986-999; sequence YLSRHHVDEKKDLK.

The protein belongs to the cation transport ATPase (P-type) (TC 3.A.3) family. Type IIA subfamily. As to quaternary structure, interacts with sarcolipin (SLN). Interacts with phospholamban (PLN). Interacts with myoregulin (MRLN). Interacts with DWORF. Interacts with VMP1. Interacts with TUNAR; the interaction occurs at low levels in low glucose conditions and is increased by high glucose levels. Mg(2+) serves as cofactor. In terms of tissue distribution, found in most tissues. Most abundant in large and small intestine, spleen and lung. Also detected in PC12 cells.

Its subcellular location is the endoplasmic reticulum membrane. The protein localises to the sarcoplasmic reticulum membrane. The enzyme catalyses Ca(2+)(in) + ATP + H2O = Ca(2+)(out) + ADP + phosphate + H(+). With respect to regulation, inhibited by sarcolipin (SLN), phospholamban (PLN) and myoregulin (MRLN). Enhanced by DWORF; DWORF increases activity by displacing sarcolipin (SLN), phospholamban (PLN) and myoregulin (MRLN). Its function is as follows. This magnesium-dependent enzyme catalyzes the hydrolysis of ATP coupled with the transport of the calcium. Transports calcium ions from the cytosol into the sarcoplasmic/endoplasmic reticulum lumen. Contributes to calcium sequestration involved in muscular excitation/contraction. This magnesium-dependent enzyme catalyzes the hydrolysis of ATP coupled with the transport of calcium. Transports calcium ions from the cytosol into the sarcoplasmic/endoplasmic reticulum lumen. Contributes to calcium sequestration involved in muscular excitation/contraction. The protein is Sarcoplasmic/endoplasmic reticulum calcium ATPase 3 (Atp2a3) of Rattus norvegicus (Rat).